We begin with the raw amino-acid sequence, 241 residues long: MIDFTGKTSLITGASGGIGSAIARLLHKLGSKVIISGSNEKKLKLLGNTLKDNYIIEVCNLANKEECNNLISKISNLDILVCNAGITSDTLAIRMKDQDFDKVIDINLKANFILNREAIKKMIQKRYGRIINISSIVGIAGNPGQANYCASKAGLIGMTKSLSYEVATRGITVNAVAPGFIKSDMTDKLNEKQREAIVQKIPLGTYGIPEDVAYAVAFLASNHASYITGQTLHVNGGMLMV.

NADP(+)-binding positions include 13–16, serine 38, 57–58, and asparagine 83; these read GASG and EV. Serine 135 is a binding site for substrate. The active-site Proton acceptor is tyrosine 148. Residues 148–152 and isoleucine 181 contribute to the NADP(+) site; that span reads YCASK.

The protein belongs to the short-chain dehydrogenases/reductases (SDR) family. In terms of assembly, homotetramer.

The catalysed reaction is a (3R)-hydroxyacyl-[ACP] + NADP(+) = a 3-oxoacyl-[ACP] + NADPH + H(+). It functions in the pathway lipid metabolism; fatty acid biosynthesis. In terms of biological role, catalyzes the NADPH-dependent reduction of beta-ketoacyl-ACP substrates to beta-hydroxyacyl-ACP products, the first reductive step in the elongation cycle of fatty acid biosynthesis. The polypeptide is 3-oxoacyl-[acyl-carrier-protein] reductase FabG (fabG) (Rickettsia typhi (strain ATCC VR-144 / Wilmington)).